The following is a 461-amino-acid chain: Hydroxyproline dehydrogenase (461 aa).

K310 carries the post-translational modification N6-acetyllysine.

This sequence belongs to the proline oxidase family. Requires FAD as cofactor.

The enzyme catalyses trans-4-hydroxy-L-proline + a quinone = (3R,5S)-1-pyrroline-3-hydroxy-5-carboxylate + a quinol + H(+). It carries out the reaction L-proline + a quinone = (S)-1-pyrroline-5-carboxylate + a quinol + H(+). It functions in the pathway amino-acid degradation; L-proline degradation into L-glutamate; L-glutamate from L-proline: step 1/2. Its function is as follows. Dehydrogenase that converts trans-4-L-hydroxyproline to delta-1-pyrroline-3-hydroxy-5-carboxylate (Hyp) using ubiquinone-10 as the terminal electron acceptor. Can also use proline as a substrate but with a very much lower efficiency. Does not react with other diastereomers of Hyp: trans-4-D-hydroxyproline and cis-4-L-hydroxyproline. Ubiquininone analogs such as menadione, duroquinone and ubiquinone-1 react more efficiently than oxygen as the terminal electron acceptor during catalysis. The chain is Hydroxyproline dehydrogenase from Bos taurus (Bovine).